The primary structure comprises 283 residues: Acetyl-coenzyme A carboxylase carboxyl transferase subunit beta (283 aa).

Positions 27 to 283 (VWVKCERCGE…LLDLHLRGEK (257 aa)) constitute a CoA carboxyltransferase N-terminal domain. The Zn(2+) site is built by Cys31, Cys34, Cys50, and Cys53. The segment at 31 to 53 (CERCGEILFKKELDKNYKVCLKC) adopts a C4-type zinc-finger fold.

This sequence belongs to the AccD/PCCB family. Acetyl-CoA carboxylase is a heterohexamer composed of biotin carboxyl carrier protein (AccB), biotin carboxylase (AccC) and two subunits each of ACCase subunit alpha (AccA) and ACCase subunit beta (AccD). Requires Zn(2+) as cofactor.

The protein localises to the cytoplasm. It catalyses the reaction N(6)-carboxybiotinyl-L-lysyl-[protein] + acetyl-CoA = N(6)-biotinyl-L-lysyl-[protein] + malonyl-CoA. Its pathway is lipid metabolism; malonyl-CoA biosynthesis; malonyl-CoA from acetyl-CoA: step 1/1. Component of the acetyl coenzyme A carboxylase (ACC) complex. Biotin carboxylase (BC) catalyzes the carboxylation of biotin on its carrier protein (BCCP) and then the CO(2) group is transferred by the transcarboxylase to acetyl-CoA to form malonyl-CoA. The protein is Acetyl-coenzyme A carboxylase carboxyl transferase subunit beta of Pelotomaculum thermopropionicum (strain DSM 13744 / JCM 10971 / SI).